Here is a 158-residue protein sequence, read N- to C-terminus: Small ribosomal subunit protein uS9 (158 aa).

It belongs to the universal ribosomal protein uS9 family.

This chain is Small ribosomal subunit protein uS9, found in Brucella abortus (strain S19).